Consider the following 1353-residue polypeptide: Adenylate cyclase type 9 (1353 aa).

Disordered regions lie at residues methionine 1–serine 27 and serine 49–glycine 71. Over methionine 1–arginine 117 the chain is Cytoplasmic. Polar residues predominate over residues glutamate 16–serine 27. Residues serine 49–arginine 66 show a composition bias toward low complexity. The helical transmembrane segment at tyrosine 118–methionine 138 threads the bilayer. At arginine 139–arginine 141 the chain is on the extracellular side. Residues leucine 142–phenylalanine 162 traverse the membrane as a helical segment. Residues threonine 163 to histidine 171 are Cytoplasmic-facing. A helical membrane pass occupies residues tyrosine 172–phenylalanine 192. Topologically, residues glutamine 193–aspartate 215 are extracellular. N-linked (GlcNAc...) asparagine glycosylation occurs at asparagine 206. A helical transmembrane segment spans residues threonine 216–tyrosine 235. Residues threonine 236 to proline 241 lie on the Cytoplasmic side of the membrane. The helical transmembrane segment at leucine 242–phenylalanine 259 threads the bilayer. The Extracellular portion of the chain corresponds to glycine 260–glutamate 280. The chain crosses the membrane as a helical span at residues leucine 281–methionine 301. Residues serine 302–serine 786 lie on the Cytoplasmic side of the membrane. A disordered region spans residues glutamine 349–isoleucine 375. A compositionally biased stretch (basic residues) spans lysine 359–serine 374. The region spanning serine 394–glutamate 521 is the Guanylate cyclase 1 domain. Aspartate 399, isoleucine 400, and aspartate 443 together coordinate Mg(2+). ATP-binding positions include aspartate 399–threonine 404, leucine 441–aspartate 443, and arginine 487. At serine 610 the chain carries Phosphoserine. The tract at residues glutamate 642–lysine 684 is disordered. A phosphoserine mark is found at serine 688, serine 691, and serine 706. Residues serine 787–leucine 807 form a helical membrane-spanning segment. Over lysine 808–proline 818 the chain is Extracellular. The chain crosses the membrane as a helical span at residues alanine 819 to isoleucine 839. Residues arginine 840–cysteine 867 lie on the Cytoplasmic side of the membrane. Residues isoleucine 868–tyrosine 888 traverse the membrane as a helical segment. The Extracellular portion of the chain corresponds to glutamate 889–asparagine 891. Residues isoleucine 892 to phenylalanine 912 traverse the membrane as a helical segment. Residues cysteine 913–arginine 920 lie on the Cytoplasmic side of the membrane. The helical transmembrane segment at serine 921–proline 941 threads the bilayer. At aspartate 942–alanine 975 the chain is on the extracellular side. Asparagine 955 and asparagine 964 each carry an N-linked (GlcNAc...) asparagine glycan. Residues serine 976–leucine 996 traverse the membrane as a helical segment. At asparagine 997–valine 1353 the chain is on the cytoplasmic side. The region spanning glycine 1058–aspartate 1198 is the Guanylate cyclase 2 domain. Residues lysine 1108, aspartate 1185–tryptophan 1187, asparagine 1192–arginine 1196, and lysine 1232 each bind ATP. Serine 1257, serine 1259, serine 1295, and serine 1307 each carry phosphoserine. A compositionally biased stretch (polar residues) spans serine 1292 to alanine 1301. Residues serine 1292–lysine 1326 are disordered. Positions lysine 1302–lysine 1326 are enriched in basic and acidic residues.

This sequence belongs to the adenylyl cyclase class-4/guanylyl cyclase family. Mg(2+) is required as a cofactor. Requires Mn(2+) as cofactor. Detected in skeletal muscle, pancreas, lung, heart, kidney, liver, brain and placenta. Expressed in multiple cells of the lung, with expression highest in airway smooth muscle.

It is found in the cell membrane. The catalysed reaction is ATP = 3',5'-cyclic AMP + diphosphate. Insensitive to calcium/calmodulin, forskolin and somatostatin. Stimulated by beta-adrenergic receptor activation. Activity is down-regulated by calcium/calcineurin. Its function is as follows. Adenylyl cyclase that catalyzes the formation of the signaling molecule cAMP in response to activation of G protein-coupled receptors. Contributes to signaling cascades activated by CRH (corticotropin-releasing factor), corticosteroids and beta-adrenergic receptors. This Homo sapiens (Human) protein is Adenylate cyclase type 9 (ADCY9).